A 322-amino-acid chain; its full sequence is Eukaryotic translation initiation factor 3 subunit I (322 aa).

5 WD repeats span residues 4 to 43, 46 to 85, 141 to 180, 184 to 223, and 281 to 322; these read GHER…RLGT, GHQG…VIAS, MTES…KVVD, DHTG…CLKT, and GHFG…NIFE.

It belongs to the eIF-3 subunit I family. Component of the eukaryotic translation initiation factor 3 (eIF-3) complex. The eIF-3 complex interacts with pix.

The protein localises to the cytoplasm. Component of the eukaryotic translation initiation factor 3 (eIF-3) complex, which is involved in protein synthesis of a specialized repertoire of mRNAs and, together with other initiation factors, stimulates binding of mRNA and methionyl-tRNAi to the 40S ribosome. The eIF-3 complex specifically targets and initiates translation of a subset of mRNAs involved in cell proliferation. The sequence is that of Eukaryotic translation initiation factor 3 subunit I from Drosophila willistoni (Fruit fly).